The primary structure comprises 474 residues: Phenylalanine--tRNA ligase alpha subunit (474 aa).

Residues Thr317, 356–358, and Tyr396 each bind L-phenylalanine; that span reads QLE. Glu398 provides a ligand contact to Mg(2+). Position 421 (Phe421) interacts with L-phenylalanine.

This sequence belongs to the class-II aminoacyl-tRNA synthetase family. Phe-tRNA synthetase alpha subunit type 2 subfamily. As to quaternary structure, tetramer of two alpha and two beta subunits. The cofactor is Mg(2+).

The protein resides in the cytoplasm. It catalyses the reaction tRNA(Phe) + L-phenylalanine + ATP = L-phenylalanyl-tRNA(Phe) + AMP + diphosphate + H(+). This chain is Phenylalanine--tRNA ligase alpha subunit, found in Methanocorpusculum labreanum (strain ATCC 43576 / DSM 4855 / Z).